The chain runs to 289 residues: Eukaryotic translation initiation factor 3 subunit G (289 aa).

A disordered region spans residues 1–33 (MSRPTKADWADDEEFDDPSALPPQQITTNKDGT). The region spanning 209 to 287 (ATLRVTNVSE…LILRVEFAKR (79 aa)) is the RRM domain.

Belongs to the eIF-3 subunit G family. In terms of assembly, component of the eukaryotic translation initiation factor 3 (eIF-3) complex.

It localises to the cytoplasm. Functionally, RNA-binding component of the eukaryotic translation initiation factor 3 (eIF-3) complex, which is involved in protein synthesis of a specialized repertoire of mRNAs and, together with other initiation factors, stimulates binding of mRNA and methionyl-tRNAi to the 40S ribosome. The eIF-3 complex specifically targets and initiates translation of a subset of mRNAs involved in cell proliferation. This subunit can bind 18S rRNA. In Emericella nidulans (strain FGSC A4 / ATCC 38163 / CBS 112.46 / NRRL 194 / M139) (Aspergillus nidulans), this protein is Eukaryotic translation initiation factor 3 subunit G (tif35).